We begin with the raw amino-acid sequence, 179 residues long: Cell division protein SepF (179 aa).

The tract at residues 22-53 (LPYEKRDEPVFTPVNSSQEPALPMNQPSQSVG) is disordered. The span at 34–53 (PVNSSQEPALPMNQPSQSVG) shows a compositional bias: polar residues.

This sequence belongs to the SepF family. Homodimer. Interacts with FtsZ.

Its subcellular location is the cytoplasm. Cell division protein that is part of the divisome complex and is recruited early to the Z-ring. Probably stimulates Z-ring formation, perhaps through the cross-linking of FtsZ protofilaments. Its function overlaps with FtsA. This chain is Cell division protein SepF, found in Streptococcus pneumoniae (strain P1031).